The primary structure comprises 198 residues: Syndecan-4 (198 aa).

The first 23 residues, 1 to 23 (MAPACLLAPLLLLLLGGFPLVPG), serve as a signal peptide directing secretion. Topologically, residues 24 to 145 (ESIRETEVID…QGSNIFERTE (122 aa)) are extracellular. 2 disordered regions span residues 42–76 (YFSG…PRPF) and 94–130 (AQPG…NKVS). O-linked (Xyl...) (glycosaminoglycan) serine glycosylation is found at serine 44, serine 62, and serine 64. Residues 48–71 (PDDEDAGGSDDFELSGSGDLDDTE) show a composition bias toward acidic residues. A compositionally biased stretch (basic and acidic residues) spans 102–118 (SEPKELEENEVIPKRAP). The chain crosses the membrane as a helical span at residues 146–170 (VLAALIVGGVVGILFAVFLILLLVY). At 171–198 (RMKKKDEGSYDLGKKPIYKKAPTNEFYA) the chain is on the cytoplasmic side.

Belongs to the syndecan proteoglycan family. Homodimer. Interacts with CDCP1 and SDCBP. Interacts (via its cytoplasmic domain) with GIPC (via its PDZ domain). Interacts (via its cytoplasmic domain) with NUDT16L1. Interacts with DNM2; this interaction is markedly enhanced at focal ahesion site upon induction of focal adhesions and stress-fiber formation. In terms of processing, shedding is enhanced by a number of factors such as heparanase, thrombin or EGF. Also by stress and wound healing. PMA-mediated shedding is inhibited by TIMP3. O-glycosylated; contains both chondroitin sulfate and heparan sulfate. Ser-44, Ser-62 and Ser-64 can all be modified by either chondroitin sulfate or heparan sulfate, and the protein exists in forms that contain only chondroitin sulfate, only heparan sulfate and both chondroitin sulfate and heparan sulfate. In terms of tissue distribution, ubiquitous. Highest levels in liver, kidney and lung.

It is found in the membrane. The protein localises to the secreted. Its function is as follows. Cell surface proteoglycan which regulates exosome biogenesis in concert with SDCBP and PDCD6IP. The polypeptide is Syndecan-4 (Mus musculus (Mouse)).